A 226-amino-acid polypeptide reads, in one-letter code: UPF0173 metal-dependent hydrolase GTNG_2675 (226 aa).

It belongs to the UPF0173 family.

In Geobacillus thermodenitrificans (strain NG80-2), this protein is UPF0173 metal-dependent hydrolase GTNG_2675.